The primary structure comprises 240 residues: Uridylate kinase (240 aa).

Position 12–15 (12–15 (KLSG)) interacts with ATP. An involved in allosteric activation by GTP region spans residues 20–25 (GEDGFG). Glycine 54 provides a ligand contact to UMP. Glycine 55 and arginine 59 together coordinate ATP. UMP is bound by residues aspartate 74 and 135 to 142 (TGNPYFST). Residues asparagine 163, tyrosine 169, and aspartate 172 each contribute to the ATP site.

The protein belongs to the UMP kinase family. Homohexamer.

The protein resides in the cytoplasm. The catalysed reaction is UMP + ATP = UDP + ADP. It functions in the pathway pyrimidine metabolism; CTP biosynthesis via de novo pathway; UDP from UMP (UMPK route): step 1/1. Allosterically activated by GTP. Probably inhibited by UTP. Catalyzes the reversible phosphorylation of UMP to UDP. The chain is Uridylate kinase (pyrH) from Enterococcus faecalis (strain ATCC 700802 / V583).